The sequence spans 352 residues: Uroporphyrinogen decarboxylase (352 aa).

Substrate contacts are provided by residues 26–30 (RQAGR), Asp76, Tyr153, Ser208, and His323.

Belongs to the uroporphyrinogen decarboxylase family. As to quaternary structure, homodimer.

The protein resides in the cytoplasm. It catalyses the reaction uroporphyrinogen III + 4 H(+) = coproporphyrinogen III + 4 CO2. The protein operates within porphyrin-containing compound metabolism; protoporphyrin-IX biosynthesis; coproporphyrinogen-III from 5-aminolevulinate: step 4/4. In terms of biological role, catalyzes the decarboxylation of four acetate groups of uroporphyrinogen-III to yield coproporphyrinogen-III. The chain is Uroporphyrinogen decarboxylase from Synechococcus sp. (strain CC9605).